Consider the following 295-residue polypeptide: tRNA-cytidine(32) 2-sulfurtransferase (295 aa).

Positions serine 63–serine 68 match the PP-loop motif motif. [4Fe-4S] cluster-binding residues include cysteine 138, cysteine 141, and cysteine 229.

Belongs to the TtcA family. Homodimer. The cofactor is Mg(2+). It depends on [4Fe-4S] cluster as a cofactor.

It localises to the cytoplasm. It carries out the reaction cytidine(32) in tRNA + S-sulfanyl-L-cysteinyl-[cysteine desulfurase] + AH2 + ATP = 2-thiocytidine(32) in tRNA + L-cysteinyl-[cysteine desulfurase] + A + AMP + diphosphate + H(+). Its pathway is tRNA modification. Functionally, catalyzes the ATP-dependent 2-thiolation of cytidine in position 32 of tRNA, to form 2-thiocytidine (s(2)C32). The sulfur atoms are provided by the cysteine/cysteine desulfurase (IscS) system. The sequence is that of tRNA-cytidine(32) 2-sulfurtransferase from Hyphomonas neptunium (strain ATCC 15444).